We begin with the raw amino-acid sequence, 388 residues long: Succinate--CoA ligase [ADP-forming] subunit beta (388 aa).

Positions 9-244 (KQLFAEFGLP…PSQEDEREAH (236 aa)) constitute an ATP-grasp domain. Residues K46, 53 to 55 (GRG), E99, S102, and E107 each bind ATP. 2 residues coordinate Mg(2+): N199 and D213. Substrate-binding positions include N264 and 321 to 323 (GIV).

The protein belongs to the succinate/malate CoA ligase beta subunit family. As to quaternary structure, heterotetramer of two alpha and two beta subunits. Mg(2+) serves as cofactor.

The catalysed reaction is succinate + ATP + CoA = succinyl-CoA + ADP + phosphate. It carries out the reaction GTP + succinate + CoA = succinyl-CoA + GDP + phosphate. The protein operates within carbohydrate metabolism; tricarboxylic acid cycle; succinate from succinyl-CoA (ligase route): step 1/1. Functionally, succinyl-CoA synthetase functions in the citric acid cycle (TCA), coupling the hydrolysis of succinyl-CoA to the synthesis of either ATP or GTP and thus represents the only step of substrate-level phosphorylation in the TCA. The beta subunit provides nucleotide specificity of the enzyme and binds the substrate succinate, while the binding sites for coenzyme A and phosphate are found in the alpha subunit. In Vibrio parahaemolyticus serotype O3:K6 (strain RIMD 2210633), this protein is Succinate--CoA ligase [ADP-forming] subunit beta.